The following is a 415-amino-acid chain: Glutamate-1-semialdehyde 2,1-aminomutase (415 aa).

Residue Lys260 is modified to N6-(pyridoxal phosphate)lysine.

The protein belongs to the class-III pyridoxal-phosphate-dependent aminotransferase family. HemL subfamily. Pyridoxal 5'-phosphate is required as a cofactor.

It localises to the cytoplasm. It catalyses the reaction (S)-4-amino-5-oxopentanoate = 5-aminolevulinate. Its pathway is porphyrin-containing compound metabolism; protoporphyrin-IX biosynthesis; 5-aminolevulinate from L-glutamyl-tRNA(Glu): step 2/2. This Methanoculleus marisnigri (strain ATCC 35101 / DSM 1498 / JR1) protein is Glutamate-1-semialdehyde 2,1-aminomutase.